The chain runs to 272 residues: Tryptophan synthase alpha chain (272 aa).

Catalysis depends on proton acceptor residues glutamate 49 and glutamate 60.

This sequence belongs to the TrpA family. Tetramer of two alpha and two beta chains.

It catalyses the reaction (1S,2R)-1-C-(indol-3-yl)glycerol 3-phosphate + L-serine = D-glyceraldehyde 3-phosphate + L-tryptophan + H2O. It functions in the pathway amino-acid biosynthesis; L-tryptophan biosynthesis; L-tryptophan from chorismate: step 5/5. Its function is as follows. The alpha subunit is responsible for the aldol cleavage of indoleglycerol phosphate to indole and glyceraldehyde 3-phosphate. The sequence is that of Tryptophan synthase alpha chain from Legionella pneumophila (strain Paris).